The chain runs to 267 residues: Phosphatidylserine decarboxylase proenzyme (267 aa).

Catalysis depends on charge relay system; for autoendoproteolytic cleavage activity residues Asp78, His132, and Ser236. The active-site Schiff-base intermediate with substrate; via pyruvic acid; for decarboxylase activity is Ser236. Ser236 is subject to Pyruvic acid (Ser); by autocatalysis.

The protein belongs to the phosphatidylserine decarboxylase family. PSD-B subfamily. Prokaryotic type I sub-subfamily. In terms of assembly, heterodimer of a large membrane-associated beta subunit and a small pyruvoyl-containing alpha subunit. It depends on pyruvate as a cofactor. Is synthesized initially as an inactive proenzyme. Formation of the active enzyme involves a self-maturation process in which the active site pyruvoyl group is generated from an internal serine residue via an autocatalytic post-translational modification. Two non-identical subunits are generated from the proenzyme in this reaction, and the pyruvate is formed at the N-terminus of the alpha chain, which is derived from the carboxyl end of the proenzyme. The autoendoproteolytic cleavage occurs by a canonical serine protease mechanism, in which the side chain hydroxyl group of the serine supplies its oxygen atom to form the C-terminus of the beta chain, while the remainder of the serine residue undergoes an oxidative deamination to produce ammonia and the pyruvoyl prosthetic group on the alpha chain. During this reaction, the Ser that is part of the protease active site of the proenzyme becomes the pyruvoyl prosthetic group, which constitutes an essential element of the active site of the mature decarboxylase.

It is found in the cell membrane. The enzyme catalyses a 1,2-diacyl-sn-glycero-3-phospho-L-serine + H(+) = a 1,2-diacyl-sn-glycero-3-phosphoethanolamine + CO2. It participates in phospholipid metabolism; phosphatidylethanolamine biosynthesis; phosphatidylethanolamine from CDP-diacylglycerol: step 2/2. In terms of biological role, catalyzes the formation of phosphatidylethanolamine (PtdEtn) from phosphatidylserine (PtdSer). The sequence is that of Phosphatidylserine decarboxylase proenzyme from Helicobacter pylori (strain Shi470).